Consider the following 76-residue polypeptide: Virulence-associated protein VagC (76 aa).

In terms of domain architecture, SpoVT-AbrB spans 4–45; it reads VSIFKNGNNRAIRLPRDLDFEGVSELEIVREGDSIILRPVRP.

The protein belongs to the VapB family.

This chain is Virulence-associated protein VagC (vagC), found in Salmonella dublin.